Here is a 185-residue protein sequence, read N- to C-terminus: Hypoxanthine/guanine phosphoribosyltransferase (185 aa).

It belongs to the purine/pyrimidine phosphoribosyltransferase family. Archaeal HPRT subfamily. Homodimer.

Its subcellular location is the cytoplasm. It catalyses the reaction IMP + diphosphate = hypoxanthine + 5-phospho-alpha-D-ribose 1-diphosphate. The catalysed reaction is GMP + diphosphate = guanine + 5-phospho-alpha-D-ribose 1-diphosphate. It participates in purine metabolism; IMP biosynthesis via salvage pathway; IMP from hypoxanthine: step 1/1. Catalyzes a salvage reaction resulting in the formation of IMP that is energically less costly than de novo synthesis. The polypeptide is Hypoxanthine/guanine phosphoribosyltransferase (Methanococcus vannielii (strain ATCC 35089 / DSM 1224 / JCM 13029 / OCM 148 / SB)).